The sequence spans 172 residues: Small t antigen (172 aa).

M1 carries the post-translational modification N-acetylmethionine; by host. Residues 12 to 75 enclose the J domain; sequence ELMDLLGLER…VKVAHQPDFG (64 aa). The segment at 101-114 adopts a C4-type; atypical zinc-finger fold; the sequence is CSKKPSVHCPCMLC. Residues 120–141 form an H1C3-type; atypical zinc finger; that stretch reads HLNRKFLRKEPLVWIDCYCIDC.

In terms of assembly, interacts with host PPP2R1A; the interaction inhibits PP2A activity.

The protein resides in the host cytoplasm. The protein localises to the host nucleus. Promotes efficient viral genome replication by accelerating both G1 and S phase progression of the cell cycle. Inhibits host PP2A by binding to the A subunit, thereby displacing lower affinity regulatory B subunit. Inactivation of PP2A in turn results in the transactivation of cyclin A and cyclin D1 promoters. Late during the infection cycle, ST may induce dephosphorylation of host MTOR, leading to the inhibition of cap-dependent translation. May establish and maintain high levels of viral genomes during persistent infection in cell culture. The polypeptide is Small t antigen (BK polyomavirus (strain AS) (BKPyV)).